We begin with the raw amino-acid sequence, 388 residues long: Succinate--CoA ligase [ADP-forming] subunit beta (388 aa).

In terms of domain architecture, ATP-grasp spans 9–244; that stretch reads KQLFARYGLP…HSQEDEREAH (236 aa). ATP-binding positions include K46, 53-55, E99, T102, and E107; that span reads GRG. Residues N199 and D213 each contribute to the Mg(2+) site. Residues N264 and 321–323 each bind substrate; that span reads GIV.

It belongs to the succinate/malate CoA ligase beta subunit family. In terms of assembly, heterotetramer of two alpha and two beta subunits. Requires Mg(2+) as cofactor.

It carries out the reaction succinate + ATP + CoA = succinyl-CoA + ADP + phosphate. The catalysed reaction is GTP + succinate + CoA = succinyl-CoA + GDP + phosphate. It functions in the pathway carbohydrate metabolism; tricarboxylic acid cycle; succinate from succinyl-CoA (ligase route): step 1/1. Functionally, succinyl-CoA synthetase functions in the citric acid cycle (TCA), coupling the hydrolysis of succinyl-CoA to the synthesis of either ATP or GTP and thus represents the only step of substrate-level phosphorylation in the TCA. The beta subunit provides nucleotide specificity of the enzyme and binds the substrate succinate, while the binding sites for coenzyme A and phosphate are found in the alpha subunit. The protein is Succinate--CoA ligase [ADP-forming] subunit beta of Sodalis glossinidius (strain morsitans).